Here is a 225-residue protein sequence, read N- to C-terminus: MSDTEAPVEVQEDFEVVEEFTPVVLATPIPEEVQQAQTEIKLFNKWSFEEVEVKDASLVDYVQVRQPIFVAHTAGRYANKRFRKAQCPIIERLTNSLMMNGRNNGKKLKAVRIIKHTLDIINVLTDQNPIQVVVDAITNTGPREDTTRVGGGGAARRQAVDVSPLRRVNQAIALLTIGAREAAFRNIKTIAETLAEELINAAKGSSTSYAIKKKDELERVAKSNR.

The residue at position 2 (Ser-2) is an N-acetylserine. The residue at position 27 (Thr-27) is a Phosphothreonine. Residues Lys-45 and Lys-203 each participate in a glycyl lysine isopeptide (Lys-Gly) (interchain with G-Cter in ubiquitin) cross-link.

It belongs to the universal ribosomal protein uS7 family. As to quaternary structure, component of the small ribosomal subunit (SSU). Mature yeast ribosomes consist of a small (40S) and a large (60S) subunit. The 40S small subunit contains 1 molecule of ribosomal RNA (18S rRNA) and 33 different proteins (encoded by 57 genes). The large 60S subunit contains 3 rRNA molecules (25S, 5.8S and 5S rRNA) and 46 different proteins (encoded by 81 genes). In terms of processing, N-terminally acetylated by acetyltransferase NatA.

Its subcellular location is the cytoplasm. Component of the ribosome, a large ribonucleoprotein complex responsible for the synthesis of proteins in the cell. The small ribosomal subunit (SSU) binds messenger RNAs (mRNAs) and translates the encoded message by selecting cognate aminoacyl-transfer RNA (tRNA) molecules. The large subunit (LSU) contains the ribosomal catalytic site termed the peptidyl transferase center (PTC), which catalyzes the formation of peptide bonds, thereby polymerizing the amino acids delivered by tRNAs into a polypeptide chain. The nascent polypeptides leave the ribosome through a tunnel in the LSU and interact with protein factors that function in enzymatic processing, targeting, and the membrane insertion of nascent chains at the exit of the ribosomal tunnel. In Saccharomyces cerevisiae (strain ATCC 204508 / S288c) (Baker's yeast), this protein is Small ribosomal subunit protein uS7.